A 98-amino-acid chain; its full sequence is Aspartyl/glutamyl-tRNA(Asn/Gln) amidotransferase subunit C (98 aa).

It belongs to the GatC family. Heterotrimer of A, B and C subunits.

It catalyses the reaction L-glutamyl-tRNA(Gln) + L-glutamine + ATP + H2O = L-glutaminyl-tRNA(Gln) + L-glutamate + ADP + phosphate + H(+). The enzyme catalyses L-aspartyl-tRNA(Asn) + L-glutamine + ATP + H2O = L-asparaginyl-tRNA(Asn) + L-glutamate + ADP + phosphate + 2 H(+). Its function is as follows. Allows the formation of correctly charged Asn-tRNA(Asn) or Gln-tRNA(Gln) through the transamidation of misacylated Asp-tRNA(Asn) or Glu-tRNA(Gln) in organisms which lack either or both of asparaginyl-tRNA or glutaminyl-tRNA synthetases. The reaction takes place in the presence of glutamine and ATP through an activated phospho-Asp-tRNA(Asn) or phospho-Glu-tRNA(Gln). The sequence is that of Aspartyl/glutamyl-tRNA(Asn/Gln) amidotransferase subunit C from Acidothermus cellulolyticus (strain ATCC 43068 / DSM 8971 / 11B).